The chain runs to 183 residues: ATP synthase subunit delta (183 aa).

The protein belongs to the ATPase delta chain family. As to quaternary structure, F-type ATPases have 2 components, F(1) - the catalytic core - and F(0) - the membrane proton channel. F(1) has five subunits: alpha(3), beta(3), gamma(1), delta(1), epsilon(1). F(0) has three main subunits: a(1), b(2) and c(10-14). The alpha and beta chains form an alternating ring which encloses part of the gamma chain. F(1) is attached to F(0) by a central stalk formed by the gamma and epsilon chains, while a peripheral stalk is formed by the delta and b chains.

It is found in the cell membrane. In terms of biological role, f(1)F(0) ATP synthase produces ATP from ADP in the presence of a proton or sodium gradient. F-type ATPases consist of two structural domains, F(1) containing the extramembraneous catalytic core and F(0) containing the membrane proton channel, linked together by a central stalk and a peripheral stalk. During catalysis, ATP synthesis in the catalytic domain of F(1) is coupled via a rotary mechanism of the central stalk subunits to proton translocation. Its function is as follows. This protein is part of the stalk that links CF(0) to CF(1). It either transmits conformational changes from CF(0) to CF(1) or is implicated in proton conduction. The polypeptide is ATP synthase subunit delta (Mesoplasma florum (strain ATCC 33453 / NBRC 100688 / NCTC 11704 / L1) (Acholeplasma florum)).